We begin with the raw amino-acid sequence, 89 residues long: Small ribosomal subunit protein uS15 (89 aa).

Belongs to the universal ribosomal protein uS15 family. In terms of assembly, part of the 30S ribosomal subunit. Forms a bridge to the 50S subunit in the 70S ribosome, contacting the 23S rRNA.

Functionally, one of the primary rRNA binding proteins, it binds directly to 16S rRNA where it helps nucleate assembly of the platform of the 30S subunit by binding and bridging several RNA helices of the 16S rRNA. In terms of biological role, forms an intersubunit bridge (bridge B4) with the 23S rRNA of the 50S subunit in the ribosome. The polypeptide is Small ribosomal subunit protein uS15 (Exiguobacterium sp. (strain ATCC BAA-1283 / AT1b)).